Consider the following 558-residue polypeptide: Pentatricopeptide repeat-containing protein At1g06140, mitochondrial (558 aa).

A mitochondrion-targeting transit peptide spans 1–79; it reads MLPVNRARAL…RNRHSWNTIL (79 aa). PPR repeat units follow at residues 38-68, 71-103, 108-142, 143-173, 174-208, 209-243, 245-275, 276-310, 311-345, 346-376, 377-411, 412-447, and 448-482; these read EVVL…IPCW, NRHS…MRRH, DSFN…GLDK, DDYV…IPVR, NSVL…GLAL, DALT…SFID, SDYL…SVDR, NVVM…SILP, NQCT…GIEM, DAVN…MPER, NVIS…NVVP, NSVT…GVVP, and EEEH…PMAS. The tract at residues 483–558 is type E motif; it reads AWGALLSACR…HVGQSATEVG (76 aa).

It belongs to the PPR family. PCMP-E subfamily.

The protein localises to the mitochondrion. The chain is Pentatricopeptide repeat-containing protein At1g06140, mitochondrial (PCMP-E61) from Arabidopsis thaliana (Mouse-ear cress).